A 167-amino-acid chain; its full sequence is uncharacterized protein (167 aa).

Residues 1–21 (MFDFSFPTPASAGTRMGPASC) are disordered.

This is an uncharacterized protein from Homo sapiens (Human).